Reading from the N-terminus, the 476-residue chain is MTASKSTETLPGDNTNTWSGRFDEPVSELVQRYTASVGFDKRLAEYDIQGSLAHARMLAAGGIIGPHDLDAIERGLSQIRQEIQGGGFVWQLALEDVHLNIEKRLTALIGDAGKRLHTARSRNDQVATDIRLYLRASIDRITALIHAMQKALLHLAEQHVDTVMPGFTHLQVAQPIVFGHHLIAYFEMLKRDVERLADCRKRVNKLPLGAAALAGTSYSVDRAMVAQELGFEGVCENSLDAVSDRDFAIEFCAAAALIMTHLSRLSEELILWMSPPFGFIDLADRFCTGSSIMPQKKNPDVPELVRGKTGRVNGHLVALLTLMKAQPLAYNKDNQEDKEPLFDTVDTLTDTLRIYADMMAGIRVKETAMREAAKRGYATATDLADYLTKKGLPFREAHEAVAQAVRFAEKNNRDLSALTLPELQQFSPLIEDDIFTVLTLEGSLNSRNHIGGTAPVQVAAAIRRAREWLSATPAAQ.

It belongs to the lyase 1 family. Argininosuccinate lyase subfamily.

Its subcellular location is the cytoplasm. The catalysed reaction is 2-(N(omega)-L-arginino)succinate = fumarate + L-arginine. The protein operates within amino-acid biosynthesis; L-arginine biosynthesis; L-arginine from L-ornithine and carbamoyl phosphate: step 3/3. In Nitrosospira multiformis (strain ATCC 25196 / NCIMB 11849 / C 71), this protein is Argininosuccinate lyase.